Here is a 608-residue protein sequence, read N- to C-terminus: Nuclear protein localization protein 4 homolog (608 aa).

The residue at position 2 (Ala-2) is an N-acetylalanine. N6-acetyllysine is present on Lys-179. One can recognise an MPN domain in the interval 226 to 363; the sequence is IMFENHTVAD…ICRLSPDGHF (138 aa). A RanBP2-type zinc finger spans residues 580–608; the sequence is TSAMWACQHCTFMNQPGTGHCEMCSLPRT.

It belongs to the NPL4 family. Heterodimer with UFD1. The heterodimer binds ubiquitinated proteins. The heterodimer binds to VCP and inhibits Golgi membrane fusion. Interacts with ZFAND2B; probably through VCP.

It is found in the cytoplasm. The protein resides in the cytosol. Its subcellular location is the endoplasmic reticulum. The protein localises to the nucleus. The protein operates within protein degradation; proteasomal ubiquitin-dependent pathway. In terms of biological role, the ternary complex containing UFD1, VCP and NPLOC4 binds ubiquitinated proteins and is necessary for the export of misfolded proteins from the ER to the cytoplasm, where they are degraded by the proteasome. The NPLOC4-UFD1-VCP complex regulates spindle disassembly at the end of mitosis and is necessary for the formation of a closed nuclear envelope. Acts as a negative regulator of type I interferon production via the complex formed with VCP and UFD1, which binds to RIGI and recruits RNF125 to promote ubiquitination and degradation of RIGI. This chain is Nuclear protein localization protein 4 homolog (Nploc4), found in Rattus norvegicus (Rat).